We begin with the raw amino-acid sequence, 225 residues long: Ribonuclease HII (225 aa).

Residues 35–225 (GLVAGVDEVG…SFRPCQISPD (191 aa)) enclose the RNase H type-2 domain. Aspartate 41, glutamate 42, and aspartate 137 together coordinate a divalent metal cation.

This sequence belongs to the RNase HII family. It depends on Mn(2+) as a cofactor. Mg(2+) serves as cofactor.

Its subcellular location is the cytoplasm. The catalysed reaction is Endonucleolytic cleavage to 5'-phosphomonoester.. In terms of biological role, endonuclease that specifically degrades the RNA of RNA-DNA hybrids. This chain is Ribonuclease HII, found in Nostoc sp. (strain PCC 7120 / SAG 25.82 / UTEX 2576).